The primary structure comprises 975 residues: Glycine dehydrogenase (decarboxylating) (975 aa).

K723 carries the post-translational modification N6-(pyridoxal phosphate)lysine.

The protein belongs to the GcvP family. In terms of assembly, the glycine cleavage system is composed of four proteins: P, T, L and H. Pyridoxal 5'-phosphate is required as a cofactor.

The catalysed reaction is N(6)-[(R)-lipoyl]-L-lysyl-[glycine-cleavage complex H protein] + glycine + H(+) = N(6)-[(R)-S(8)-aminomethyldihydrolipoyl]-L-lysyl-[glycine-cleavage complex H protein] + CO2. Its function is as follows. The glycine cleavage system catalyzes the degradation of glycine. The P protein binds the alpha-amino group of glycine through its pyridoxal phosphate cofactor; CO(2) is released and the remaining methylamine moiety is then transferred to the lipoamide cofactor of the H protein. This Burkholderia mallei (strain NCTC 10247) protein is Glycine dehydrogenase (decarboxylating).